Reading from the N-terminus, the 37-residue chain is Large ribosomal subunit protein bL36 (37 aa).

This sequence belongs to the bacterial ribosomal protein bL36 family.

The polypeptide is Large ribosomal subunit protein bL36 (Deinococcus geothermalis (strain DSM 11300 / CIP 105573 / AG-3a)).